Here is a 152-residue protein sequence, read N- to C-terminus: Large ribosomal subunit protein bL9 (152 aa).

It belongs to the bacterial ribosomal protein bL9 family.

Its function is as follows. Binds to the 23S rRNA. This chain is Large ribosomal subunit protein bL9, found in Mycobacterium leprae (strain Br4923).